A 210-amino-acid polypeptide reads, in one-letter code: UPF0301 protein OCAR_7326/OCA5_c07920 (210 aa).

Belongs to the UPF0301 (AlgH) family.

This Afipia carboxidovorans (strain ATCC 49405 / DSM 1227 / KCTC 32145 / OM5) (Oligotropha carboxidovorans) protein is UPF0301 protein OCAR_7326/OCA5_c07920.